The primary structure comprises 262 residues: Phosphatase SCO2771 (262 aa).

In terms of biological role, displays phosphatase activity against p-nitrophenyl phosphate (pNPP) in vitro; however, the physiological substrate is unknown. This chain is Phosphatase SCO2771, found in Streptomyces coelicolor (strain ATCC BAA-471 / A3(2) / M145).